The following is a 520-amino-acid chain: Putative lipase ATG15 (520 aa).

Topologically, residues 1–14 (MLHKSPSRKRFASP) are cytoplasmic. A helical; Signal-anchor for type II membrane protein membrane pass occupies residues 15 to 35 (LHLGCILTLTVLCLIAYYFAL). The Lumenal portion of the chain corresponds to 36–520 (PDYLSVGKSS…WLGFCTKYEL (485 aa)). Residues asparagine 173, asparagine 202, and asparagine 208 are each glycosylated (N-linked (GlcNAc...) asparagine). Serine 332 (charge relay system) is an active-site residue.

Belongs to the AB hydrolase superfamily. Lipase family. In terms of assembly, binds to both phosphatidylinositol (PI) and phosphatidylinositol 3,5-bisphosphate (PIP2).

Its subcellular location is the endosome. It localises to the multivesicular body membrane. It is found in the prevacuolar compartment membrane. The enzyme catalyses a triacylglycerol + H2O = a diacylglycerol + a fatty acid + H(+). In terms of biological role, lipase which is essential for lysis of subvacuolar cytoplasm to vacuole targeted bodies and intravacuolar autophagic bodies. Involved in the lysis of intravacuolar multivesicular body (MVB) vesicles. The intravacuolar membrane disintegration by ATG15 is critical to life span extension. This chain is Putative lipase ATG15 (ATG15), found in Saccharomyces cerevisiae (strain YJM789) (Baker's yeast).